Consider the following 280-residue polypeptide: 4-diphosphocytidyl-2-C-methyl-D-erythritol kinase (280 aa).

Residue Lys9 is part of the active site. Position 93-103 (93-103 (PVAAGLGGGSS)) interacts with ATP. The active site involves Asp135.

This sequence belongs to the GHMP kinase family. IspE subfamily.

It catalyses the reaction 4-CDP-2-C-methyl-D-erythritol + ATP = 4-CDP-2-C-methyl-D-erythritol 2-phosphate + ADP + H(+). The protein operates within isoprenoid biosynthesis; isopentenyl diphosphate biosynthesis via DXP pathway; isopentenyl diphosphate from 1-deoxy-D-xylulose 5-phosphate: step 3/6. In terms of biological role, catalyzes the phosphorylation of the position 2 hydroxy group of 4-diphosphocytidyl-2C-methyl-D-erythritol. The protein is 4-diphosphocytidyl-2-C-methyl-D-erythritol kinase of Syntrophotalea carbinolica (strain DSM 2380 / NBRC 103641 / GraBd1) (Pelobacter carbinolicus).